The sequence spans 266 residues: MRLIPLKSASQVGLWSARYIVDRINGFKPTADRPFVLGLPTGGTPLNTYKRLIELHKAGEVSFEHVATFNMDEYVGLPEDHPESYHSFMHNNFFCHIDIRPENINILNGNAEDLVAECKRYEDKIKSYGKINLFMGGVGNDGHIAFNEPASSLSSRTRVKTLTEDTRIANSRFFGGDMEQVPKLALTVGVGTLMDAEEIMILVTGHGKAQALQAAVEGSVNHMWTISTLQLHPKGMMVCDEPSTMELKVKTVRYFQQLEAANIGRL.

D72 serves as the catalytic Proton acceptor; for enolization step. D141 acts as the For ring-opening step in catalysis. H143 functions as the Proton acceptor; for ring-opening step in the catalytic mechanism. The active-site For ring-opening step is E148.

Belongs to the glucosamine/galactosamine-6-phosphate isomerase family. NagB subfamily. Homohexamer.

The enzyme catalyses alpha-D-glucosamine 6-phosphate + H2O = beta-D-fructose 6-phosphate + NH4(+). The protein operates within amino-sugar metabolism; N-acetylneuraminate degradation; D-fructose 6-phosphate from N-acetylneuraminate: step 5/5. Allosterically activated by N-acetylglucosamine 6-phosphate (GlcNAc6P). Catalyzes the reversible isomerization-deamination of glucosamine 6-phosphate (GlcN6P) to form fructose 6-phosphate (Fru6P) and ammonium ion. This Aeromonas salmonicida (strain A449) protein is Glucosamine-6-phosphate deaminase.